Reading from the N-terminus, the 165-residue chain is MTLDLTLEDPRWTILPPLADRAISATLAQMGLDPELCEISLLGCDDARITALNAEFREKPSPTNVLSWPAEDLAAETPGGTPLAPEPDFTGAVPLGDIAIAFDTCQREADAAGKPIADHVTHLIVHGLLHLLGYDHIRDEDATLMEGLETRILGNLGIDDPYTME.

Positions 126, 130, and 136 each coordinate Zn(2+).

This sequence belongs to the endoribonuclease YbeY family. The cofactor is Zn(2+).

The protein localises to the cytoplasm. In terms of biological role, single strand-specific metallo-endoribonuclease involved in late-stage 70S ribosome quality control and in maturation of the 3' terminus of the 16S rRNA. The chain is Endoribonuclease YbeY from Ruegeria pomeroyi (strain ATCC 700808 / DSM 15171 / DSS-3) (Silicibacter pomeroyi).